We begin with the raw amino-acid sequence, 504 residues long: UNC93-like protein C922.05c (504 aa).

The next 11 membrane-spanning stretches (helical) occupy residues 64 to 84 (IIVS…SGLG), 97 to 116 (ANVA…GSIC), 123 to 145 (LTLA…YKHV), 149 to 169 (GFVI…WAAQ), 186 to 206 (IAIF…VPLA), 219 to 239 (GTYA…LFMV), 275 to 293 (YWVL…FTTY), 310 to 330 (LNNL…ALFL), 343 to 363 (VGWG…LAFQ), 391 to 411 (FLYI…YWII), and 452 to 472 (YFAS…PVIW).

This sequence belongs to the unc-93 family.

Its subcellular location is the cytoplasm. The protein localises to the membrane. This is UNC93-like protein C922.05c from Schizosaccharomyces pombe (strain 972 / ATCC 24843) (Fission yeast).